Here is a 467-residue protein sequence, read N- to C-terminus: Fumarate hydratase class II (467 aa).

Residues serine 98–threonine 100, arginine 126, histidine 129–aspartate 132, serine 139–asparagine 141, and threonine 187 contribute to the substrate site. The Proton donor/acceptor role is filled by histidine 188. Residue serine 318 is part of the active site. Residues serine 319 and lysine 324–asparagine 326 each bind substrate.

This sequence belongs to the class-II fumarase/aspartase family. Fumarase subfamily. Homotetramer.

The protein resides in the cytoplasm. The catalysed reaction is (S)-malate = fumarate + H2O. It participates in carbohydrate metabolism; tricarboxylic acid cycle; (S)-malate from fumarate: step 1/1. Involved in the TCA cycle. Catalyzes the stereospecific interconversion of fumarate to L-malate. The sequence is that of Fumarate hydratase class II from Escherichia coli O6:H1 (strain CFT073 / ATCC 700928 / UPEC).